A 683-amino-acid polypeptide reads, in one-letter code: Leishmanolysin-like peptidase (683 aa).

Zn(2+) is bound at residue H257. E258 is an active-site residue. 2 residues coordinate Zn(2+): H261 and H364.

Belongs to the peptidase M8 family. It depends on Zn(2+) as a cofactor.

The protein resides in the cytoplasm. In terms of biological role, essential for the coordination of mitotic progression, and also plays a role in cell migration. This Drosophila melanogaster (Fruit fly) protein is Leishmanolysin-like peptidase (Invadolysin).